Consider the following 40-residue polypeptide: Sarcotoxin-1D (40 aa).

The protein belongs to the cecropin family.

It localises to the secreted. Sarcotoxins, which are potent bactericidal proteins, are produced in response to injury. They are cytotoxic to both Gram-positive and Gram-negative bacteria. The polypeptide is Sarcotoxin-1D (Sarcophaga peregrina (Flesh fly)).